An 80-amino-acid chain; its full sequence is MTNTKTLEANISFEEALKELEEIVKKIDKGQESLETAVNSFERGILLKNHCEKKLKEARLKIEKITKLADSTVVLEEMEV.

Belongs to the XseB family. As to quaternary structure, heterooligomer composed of large and small subunits.

The protein resides in the cytoplasm. It catalyses the reaction Exonucleolytic cleavage in either 5'- to 3'- or 3'- to 5'-direction to yield nucleoside 5'-phosphates.. Its function is as follows. Bidirectionally degrades single-stranded DNA into large acid-insoluble oligonucleotides, which are then degraded further into small acid-soluble oligonucleotides. In Rickettsia africae (strain ESF-5), this protein is Exodeoxyribonuclease 7 small subunit.